We begin with the raw amino-acid sequence, 838 residues long: Leucine--tRNA ligase (838 aa).

The 'HIGH' region signature appears at 36–46; sequence PYPSGKIHMGH. A 'KMSKS' region motif is present at residues 611–615; that stretch reads KMSKS. Residue K614 participates in ATP binding.

This sequence belongs to the class-I aminoacyl-tRNA synthetase family.

The protein localises to the cytoplasm. It catalyses the reaction tRNA(Leu) + L-leucine + ATP = L-leucyl-tRNA(Leu) + AMP + diphosphate. This chain is Leucine--tRNA ligase, found in Wolbachia pipientis wMel.